Consider the following 339-residue polypeptide: Serine/threonine-protein kinase pdik1l-B (339 aa).

The Protein kinase domain maps to 8–332; that stretch reads YDLIREVGRG…LELKLIQIAF (325 aa). Residues 14-22 and lysine 37 contribute to the ATP site; that span reads VGRGSYGLV. Catalysis depends on aspartate 164, which acts as the Proton acceptor.

It belongs to the protein kinase superfamily. Ser/Thr protein kinase family.

The protein resides in the nucleus. The enzyme catalyses L-seryl-[protein] + ATP = O-phospho-L-seryl-[protein] + ADP + H(+). The catalysed reaction is L-threonyl-[protein] + ATP = O-phospho-L-threonyl-[protein] + ADP + H(+). In Xenopus laevis (African clawed frog), this protein is Serine/threonine-protein kinase pdik1l-B (pdik1-b).